A 687-amino-acid polypeptide reads, in one-letter code: DNA-directed RNA polymerase subunit beta' (687 aa).

4 residues coordinate Zn(2+): C69, C71, C87, and C90. D495, D497, and D499 together coordinate Mg(2+).

This sequence belongs to the RNA polymerase beta' chain family. RpoC1 subfamily. In plastids the minimal PEP RNA polymerase catalytic core is composed of four subunits: alpha, beta, beta', and beta''. When a (nuclear-encoded) sigma factor is associated with the core the holoenzyme is formed, which can initiate transcription. Mg(2+) is required as a cofactor. It depends on Zn(2+) as a cofactor.

The protein localises to the plastid. It is found in the chloroplast. The enzyme catalyses RNA(n) + a ribonucleoside 5'-triphosphate = RNA(n+1) + diphosphate. Functionally, DNA-dependent RNA polymerase catalyzes the transcription of DNA into RNA using the four ribonucleoside triphosphates as substrates. The chain is DNA-directed RNA polymerase subunit beta' from Solanum tuberosum (Potato).